Reading from the N-terminus, the 856-residue chain is Phosphatidylglycerol lysyltransferase (856 aa).

A run of 13 helical transmembrane segments spans residues alanine 7 to serine 27, leucine 51 to valine 71, valine 88 to glycine 108, isoleucine 128 to alanine 148, proline 161 to serine 181, serine 208 to isoleucine 228, valine 235 to phenylalanine 255, isoleucine 280 to alanine 300, serine 342 to isoleucine 362, alanine 375 to isoleucine 395, phenylalanine 420 to valine 440, isoleucine 459 to isoleucine 479, and histidine 501 to tyrosine 521.

It belongs to the LPG synthase family.

The protein resides in the cell membrane. The catalysed reaction is L-lysyl-tRNA(Lys) + a 1,2-diacyl-sn-glycero-3-phospho-(1'-sn-glycerol) = a 1,2-diacyl-sn-glycero-3-phospho-1'-(3'-O-L-lysyl)-sn-glycerol + tRNA(Lys). In terms of biological role, catalyzes the transfer of a lysyl group from L-lysyl-tRNA(Lys) to membrane-bound phosphatidylglycerol (PG), which produces lysylphosphatidylglycerol (LPG), one of the components of the bacterial membrane with a positive net charge. LPG synthesis contributes to the resistance to cationic antimicrobial peptides (CAMPs) and likely protects B.subtilis against its own CAMPs and against those produced by competiting microorganisms (bacteriocins). In fact, the modification of anionic phosphatidylglycerol with positively charged L-lysine results in repulsion of the peptides. This Bacillus subtilis (strain 168) protein is Phosphatidylglycerol lysyltransferase (mprF).